A 228-amino-acid polypeptide reads, in one-letter code: UPF0758 protein CKR_0778 (228 aa).

The 123-residue stretch at Arg-106–Leu-228 folds into the MPN domain. Positions 177, 179, and 190 each coordinate Zn(2+). A JAMM motif motif is present at residues His-177–Asp-190.

Belongs to the UPF0758 family.

The sequence is that of UPF0758 protein CKR_0778 from Clostridium kluyveri (strain NBRC 12016).